The sequence spans 1630 residues: Separin (1630 aa).

The tract at residues 1016-1037 is disordered; sequence SKHSTGLKLCDSPRSSSMTPRG. In terms of domain architecture, Peptidase C50 spans 1443-1542; that stretch reads EDNISMILNP…SAAMKYYGKL (100 aa). Cysteine 1531 is an active-site residue.

As to quaternary structure, may bind calcium. Interacts with PDS1. Interacts with MCD1.

The protein resides in the nucleus. Its subcellular location is the cytoplasm. The protein localises to the cytoskeleton. It is found in the microtubule organizing center. It localises to the spindle pole body. It catalyses the reaction All bonds known to be hydrolyzed by this endopeptidase have arginine in P1 and an acidic residue in P4. P6 is often occupied by an acidic residue or by a hydroxy-amino-acid residue, the phosphorylation of which enhances cleavage.. With respect to regulation, it is inactivated via its interaction with PDS1, which probably covers its active site. PDS1 degradation at anaphase, liberates it and triggers MCD1 cleavage. In terms of biological role, caspase-like protease, which plays a central role in the chromosome segregation by cleaving the MCD1/SCC1 subunit of the cohesin complex at the onset of anaphase. During most of the cell cycle, it is inactivated by securin/PDS1 protein. It also promotes anaphase spindle elongation. A component of the FEAR (CDC14 early anaphase release) network which promotes CDC14 release from the nucleolus during early anaphase. Cleaves SLK19. The chain is Separin (ESP1) from Saccharomyces cerevisiae (strain ATCC 204508 / S288c) (Baker's yeast).